The sequence spans 406 residues: Histone-lysine N-methyltransferase SUV39H2 (406 aa).

The region spanning 43-101 (YEVEYLCDYRIEKGVEKFFVKWKGWPESCNTWEPTRNLKCPTLLKQFYSDLYNYFCALK) is the Chromo domain. One can recognise a Pre-SET domain in the interval 185–243 (VGCDCSDCFKGKCCPTEAGVLFAYNEHRQIKIPPGRPIYECNSRCKCGPDCPNRVVQKG). Residues Cys-187, Cys-189, Cys-192, Cys-197, Cys-198, Cys-225, Cys-229, Cys-231, and Cys-235 each contribute to the Zn(2+) site. Residues 246–369 (YSLCIFRTDN…AGEELTFDYQ (124 aa)) enclose the SET domain. Residues 257 to 259 (RGW), Tyr-300, and 326 to 327 (NH) each bind S-adenosyl-L-methionine. 4 residues coordinate Zn(2+): Cys-329, Cys-394, Cys-396, and Cys-401. Residues 390–406 (VRIACKCGAATCRGYLN) enclose the Post-SET domain.

The protein belongs to the class V-like SAM-binding methyltransferase superfamily. Histone-lysine methyltransferase family. Suvar3-9 subfamily.

Its subcellular location is the nucleus. The protein localises to the chromosome. The protein resides in the centromere. It carries out the reaction L-lysyl(9)-[histone H3] + 3 S-adenosyl-L-methionine = N(6),N(6),N(6)-trimethyl-L-lysyl(9)-[histone H3] + 3 S-adenosyl-L-homocysteine + 3 H(+). In terms of biological role, histone methyltransferase that specifically trimethylates 'Lys-9' of histone H3 using monomethylated H3 'Lys-9' as substrate. H3 'Lys-9' trimethylation represents a specific tag for epigenetic transcriptional repression by recruiting HP1 (CBX1, CBX3 and/or CBX5) proteins to methylated histones. Mainly functions in heterochromatin regions, thereby playing a central role in the establishment of constitutive heterochromatin at pericentric and telomere regions. H3 'Lys-9' trimethylation is also required to direct DNA methylation at pericentric repeats. SUV39H1 is targeted to histone H3 via its interaction with RB1 and is involved in many processes. The polypeptide is Histone-lysine N-methyltransferase SUV39H2 (suv39h2) (Xenopus tropicalis (Western clawed frog)).